The primary structure comprises 190 residues: Nuclear transcription factor Y subunit B-2 (190 aa).

Positions 1 to 30 are disordered; the sequence is MGDSDRDSGGGQNGNNQNGQSSLSPREQDR. Residues 32–38 mediate DNA binding; sequence LPIANVS. The tract at residues 59–70 is subunit association domain (SAD); it reads MQECVSEFISFV. A disordered region spans residues 168–190; that stretch reads HMYGATGGGSDSGGGAASGRTRT. Residues 172–184 are compositionally biased toward gly residues; the sequence is ATGGGSDSGGGAA.

It belongs to the NFYB/HAP3 subunit family. In terms of assembly, heterotrimeric transcription factor composed of three components, NF-YA, NF-YB and NF-YC. NF-YB and NF-YC must interact and dimerize for NF-YA association and DNA binding. Binds directly with DPB3-1. Ubiquitous. Predominantly expressed in flowers and siliques.

The protein localises to the nucleus. Its function is as follows. Component of the NF-Y/HAP transcription factor complex. The NF-Y complex stimulates the transcription of various genes by recognizing and binding to a CCAAT motif in promoters. This chain is Nuclear transcription factor Y subunit B-2, found in Arabidopsis thaliana (Mouse-ear cress).